We begin with the raw amino-acid sequence, 451 residues long: BAHD acyltransferase At3g29680 (451 aa).

Active-site proton acceptor residues include His-161 and Asp-393.

The protein belongs to the plant acyltransferase family.

This is BAHD acyltransferase At3g29680 from Arabidopsis thaliana (Mouse-ear cress).